Consider the following 317-residue polypeptide: Transcription cofactor vestigial-like protein 2 (317 aa).

Disordered regions lie at residues 41 to 76 (CNAS…ERPP), 108 to 128 (SQPS…SSGP), 191 to 214 (TEPW…GGAL), and 253 to 293 (RLAT…PSGD). Positions 44-57 (SPSSSGSGSSSFSS) are enriched in low complexity. Residues 63–76 (IKEEEGSPEKERPP) show a composition bias toward basic and acidic residues. Residues 108 to 120 (SQPSSYSPSCTSS) show a composition bias toward low complexity. Residues 196-206 (HAHPHHAHPHH) are compositionally biased toward basic residues. Residues 272 to 292 (KGEPAGAAWAGPGGPFASPSG) show a composition bias toward low complexity.

Belongs to the vestigial family. In terms of assembly, interacts with TEFs. Binds to TEAD1/TEF1. In terms of tissue distribution, skeletal muscle.

It is found in the nucleus. Its function is as follows. May act as a specific coactivator for the mammalian TEFs. May play a role in the development of skeletal muscles. The protein is Transcription cofactor vestigial-like protein 2 (VGLL2) of Homo sapiens (Human).